Consider the following 663-residue polypeptide: Probable potassium transport system protein Kup (663 aa).

The tract at residues 1 to 23 (MSDNPSSRAGPEVVPTPPPSPAA) is disordered. 12 consecutive transmembrane segments (helical) span residues 81 to 101 (PANVLGVLSLVFWAMTFVVTF), 137 to 157 (LLIILGLFGAALLYGDGVITP), 173 to 193 (PALEHWVVPVTVGILALLFFI), 201 to 221 (VGAVFGPVMLVWFLCIAILGV), 224 to 244 (ILFDATILQAVLPTHAVAFFA), 248 to 268 (WHGFLVLGGVVLVITGGEALY), 283 to 303 (WLLVAMPALMLNYMGQGAILL), 315 to 335 (LLVPGWALYPMIAVATAAAIV), 373 to 393 (IYVPEVNALLGAATIALVLGF), 399 to 419 (LAAAYGIAVTGTMAITTLLFH), 433 to 453 (AWPLTLLFLLVDLAFFGANIV), and 455 to 475 (VEEGGWFPLAAAAFVFTLLST).

This sequence belongs to the HAK/KUP transporter (TC 2.A.72) family.

It localises to the cell inner membrane. The catalysed reaction is K(+)(in) + H(+)(in) = K(+)(out) + H(+)(out). Functionally, transport of potassium into the cell. Likely operates as a K(+):H(+) symporter. This Anaeromyxobacter sp. (strain Fw109-5) protein is Probable potassium transport system protein Kup.